A 349-amino-acid polypeptide reads, in one-letter code: tRNA N6-adenosine threonylcarbamoyltransferase (349 aa).

2 residues coordinate Fe cation: H113 and H117. Substrate is bound by residues L135–G139, D169, G182, D186, and N281. Residue D309 coordinates Fe cation.

Belongs to the KAE1 / TsaD family. Requires Fe(2+) as cofactor.

The protein localises to the cytoplasm. It catalyses the reaction L-threonylcarbamoyladenylate + adenosine(37) in tRNA = N(6)-L-threonylcarbamoyladenosine(37) in tRNA + AMP + H(+). Functionally, required for the formation of a threonylcarbamoyl group on adenosine at position 37 (t(6)A37) in tRNAs that read codons beginning with adenine. Is involved in the transfer of the threonylcarbamoyl moiety of threonylcarbamoyl-AMP (TC-AMP) to the N6 group of A37, together with TsaE and TsaB. TsaD likely plays a direct catalytic role in this reaction. This is tRNA N6-adenosine threonylcarbamoyltransferase from Corynebacterium aurimucosum (strain ATCC 700975 / DSM 44827 / CIP 107346 / CN-1) (Corynebacterium nigricans).